Consider the following 476-residue polypeptide: Serine/threonine-protein kinase WAG1 (476 aa).

The Protein kinase domain maps to 93 to 400 (FKLVRHLGTG…AQDIKRHEFF (308 aa)). ATP is bound by residues 99–107 (LGTGNLGRV) and K124. D219 functions as the Proton acceptor in the catalytic mechanism.

It belongs to the protein kinase superfamily. Ser/Thr protein kinase family. Expressed in root tips and lateral root primordia.

It localises to the cytoplasm. The protein localises to the cytosol. The enzyme catalyses L-seryl-[protein] + ATP = O-phospho-L-seryl-[protein] + ADP + H(+). The catalysed reaction is L-threonyl-[protein] + ATP = O-phospho-L-threonyl-[protein] + ADP + H(+). Serine/threonine-protein kinase involved in the regulation of auxin signaling. Acts as a positive regulator of cellular auxin efflux and regulates organ development by enhancing PIN-mediated polar auxin transport. Phosphorylates conserved serine residues in the PIN auxin efflux carriers. Phosphorylation of PIN proteins is required and sufficient for apical-basal PIN polarity that enables directional intercellular auxin fluxes, which mediate differential growth, tissue patterning and organogenesis. Acts as a suppressor of root waving. The sequence is that of Serine/threonine-protein kinase WAG1 (WAG1) from Arabidopsis thaliana (Mouse-ear cress).